The primary structure comprises 187 residues: MQSEKFDINDLKRRMQGASQALQHELGGLRTGRAAASMLEPVQVDAYGTHMPLNQLATVTVPEPRLLSVQVWDKSMVRAVEKAIVDSNLGLSPATEGQVLRLRIPELNQDRRKELVKVAHKYAEAARVAVRHVRRDGLDTIKKLEKSHEISEDDQKRLDQEVQKATDSAISEIDQLLASKEKEILTV.

Belongs to the RRF family.

Its subcellular location is the cytoplasm. Responsible for the release of ribosomes from messenger RNA at the termination of protein biosynthesis. May increase the efficiency of translation by recycling ribosomes from one round of translation to another. This is Ribosome-recycling factor from Rhodopseudomonas palustris (strain HaA2).